Here is a 308-residue protein sequence, read N- to C-terminus: Olfactory receptor 2T7 (308 aa).

Topologically, residues 1 to 17 (MPTLSFWVCSATPVSPG) are extracellular. A helical membrane pass occupies residues 18 to 40 (FFALILLVFVTSIASNVVKIILI). Residues 41–51 (HIDSRLHTPMY) lie on the Cytoplasmic side of the membrane. A helical transmembrane segment spans residues 52 to 74 (FLLSQLSLRDILYISTIVPKMLV). Residues 75–88 (DQVMSQRAISFAGC) are Extracellular-facing. An intrachain disulfide couples Cys88 to Cys170. Residues 89–109 (TAQHFLYLTLAGAEFFLLGLM) form a helical membrane-spanning segment. At 110-130 (SCDRYVAICNPLHYPDLMSRK) the chain is on the cytoplasmic side. The helical transmembrane segment at 131 to 151 (ICWLIVAAAWLGGSIDGFLLT) threads the bilayer. Topologically, residues 152–188 (PVTMQFPFCASREINHFFCEVPALLKLSCTDTSAYET) are extracellular. A helical membrane pass occupies residues 189–209 (AMYVCCIMMLLIPFSVISGSY). Residues 210 to 235 (TRILITVYRMSEAEGRRKAVATCSSH) lie on the Cytoplasmic side of the membrane. A helical membrane pass occupies residues 236–256 (MVVVSLFYGAAMYTYVLPHSY). Topologically, residues 257-262 (HTPEQD) are extracellular. Residues 263–283 (KAVSAFYTILTPMLNPLIYSL) traverse the membrane as a helical segment. At 284 to 308 (RNKDVTGALQKVVGRCVSSGKVTTF) the chain is on the cytoplasmic side.

It belongs to the G-protein coupled receptor 1 family.

The protein localises to the cell membrane. Its function is as follows. Odorant receptor. The protein is Olfactory receptor 2T7 (OR2T7) of Homo sapiens (Human).